Reading from the N-terminus, the 291-residue chain is ATP synthase subunit b 2 (291 aa).

The helical transmembrane segment at 2–22 threads the bilayer; that stretch reads LIDGFTVVAQIVNFLILVWLL.

It belongs to the ATPase B chain family. As to quaternary structure, F-type ATPases have 2 components, F(1) - the catalytic core - and F(0) - the membrane proton channel. F(1) has five subunits: alpha(3), beta(3), gamma(1), delta(1), epsilon(1). F(0) has three main subunits: a(1), b(2) and c(10-14). The alpha and beta chains form an alternating ring which encloses part of the gamma chain. F(1) is attached to F(0) by a central stalk formed by the gamma and epsilon chains, while a peripheral stalk is formed by the delta and b chains.

The protein localises to the cell inner membrane. In terms of biological role, f(1)F(0) ATP synthase produces ATP from ADP in the presence of a proton or sodium gradient. F-type ATPases consist of two structural domains, F(1) containing the extramembraneous catalytic core and F(0) containing the membrane proton channel, linked together by a central stalk and a peripheral stalk. During catalysis, ATP synthesis in the catalytic domain of F(1) is coupled via a rotary mechanism of the central stalk subunits to proton translocation. Component of the F(0) channel, it forms part of the peripheral stalk, linking F(1) to F(0). This chain is ATP synthase subunit b 2, found in Nitrosospira multiformis (strain ATCC 25196 / NCIMB 11849 / C 71).